The following is a 264-amino-acid chain: 1H-3-hydroxy-4-oxoquinoline 2,4-dioxygenase (264 aa).

Substrate-binding positions include 30 to 32, 94 to 95, and tryptophan 153; these read WCQ and TS. Histidine 244 functions as the Proton donor/acceptor in the catalytic mechanism.

Belongs to the AB hydrolase superfamily. The cofactor is None. Contrary to most other dioxygenases, this enzyme does not require a cofactor for catalysis..

The catalysed reaction is 3-hydroxy-1H-quinolin-4-one + O2 = N-formylanthranilate + CO + H(+). Ring-cleaving dioxygenase involved in oxoquinoline degradation and utilization. The protein is 1H-3-hydroxy-4-oxoquinoline 2,4-dioxygenase (qdo) of Pseudomonas putida (Arthrobacter siderocapsulatus).